A 112-amino-acid polypeptide reads, in one-letter code: Macrodomain Ori protein (112 aa).

The disordered stretch occupies residues 91–112 (FHTLSGGKPQVEGAEDYTEADD). The segment covering 103 to 112 (GAEDYTEADD) has biased composition (acidic residues).

Belongs to the MaoP family.

Involved in the organization of the Ori region of the chromosome into a macrodomain (MD). It constrains DNA mobility in the Ori macrodomain and limits long-distance DNA interactions with other chromosomal regions. This chain is Macrodomain Ori protein, found in Salmonella choleraesuis (strain SC-B67).